The sequence spans 506 residues: Sugar transport protein 5 (506 aa).

Topologically, residues 1–19 are cytoplasmic; the sequence is MAGGGLALDVSSAGNIDAK. The next 12 membrane-spanning stretches (helical) occupy residues 20 to 40, 81 to 101, 117 to 137, 141 to 161, 168 to 188, 201 to 221, 287 to 307, 325 to 345, 352 to 372, 390 to 410, 430 to 450, and 456 to 476; these read ITAAVVMSCIVAASCGLIFGY, LLTAFTSSLYVAGLVASLVAS, GFTFLFGALINGLAANIAMLI, ILLGFGVGFTNQAAPVYLSEV, GAFNIGFSCFISMGVVAANLI, ISLGLAAVPAAIMTVGCLFIS, LVVAVVIPCFQQLTGITVNAF, IATFILGFVNLGSLLLSTMVI, FLFIAGGILMLLCQIAVAVLL, VTVVVLLCIYAAGFGWSWGPL, LSVAVNFAATFALSQTFLATL, and GAFLFYGGWIFTMTIFVIMFL. At 477–506 the chain is on the cytoplasmic side; sequence PETKGIPVDSMYQVWEKHWYWQRFTKPTST.

The protein belongs to the major facilitator superfamily. Sugar transporter (TC 2.A.1.1) family.

The protein localises to the membrane. Its function is as follows. Mediates an active uptake of hexoses, probably by sugar/hydrogen symport. The sequence is that of Sugar transport protein 5 (STP5) from Arabidopsis thaliana (Mouse-ear cress).